Reading from the N-terminus, the 821-residue chain is Leucine--tRNA ligase (821 aa).

The short motif at 40–50 is the 'HIGH' region element; it reads PYPSGRIHMGH. The 'KMSKS' region signature appears at 586-590; it reads KMSKS. ATP is bound at residue K589.

Belongs to the class-I aminoacyl-tRNA synthetase family.

The protein resides in the cytoplasm. The catalysed reaction is tRNA(Leu) + L-leucine + ATP = L-leucyl-tRNA(Leu) + AMP + diphosphate. This chain is Leucine--tRNA ligase, found in Aliarcobacter butzleri (strain RM4018) (Arcobacter butzleri).